We begin with the raw amino-acid sequence, 164 residues long: Phosphopantetheine adenylyltransferase (164 aa).

Position 10 (Thr-10) interacts with substrate. ATP contacts are provided by residues 10 to 11 and His-18; that span reads TF. Residues Lys-42, Leu-74, and Arg-88 each contribute to the substrate site. ATP is bound by residues 89–91, Glu-99, and 124–130; these read GIR and NSFISST.

The protein belongs to the bacterial CoaD family. In terms of assembly, homohexamer. The cofactor is Mg(2+).

The protein localises to the cytoplasm. It carries out the reaction (R)-4'-phosphopantetheine + ATP + H(+) = 3'-dephospho-CoA + diphosphate. It functions in the pathway cofactor biosynthesis; coenzyme A biosynthesis; CoA from (R)-pantothenate: step 4/5. Reversibly transfers an adenylyl group from ATP to 4'-phosphopantetheine, yielding dephospho-CoA (dPCoA) and pyrophosphate. This Pseudoalteromonas translucida (strain TAC 125) protein is Phosphopantetheine adenylyltransferase.